The sequence spans 203 residues: Glycerol-3-phosphate acyltransferase (203 aa).

Transmembrane regions (helical) follow at residues 4–24 (LVLL…AVLI), 80–100 (PFLL…PIFF), 116–136 (APIG…TVFI), and 138–158 (GYSS…TWFV).

Belongs to the PlsY family. As to quaternary structure, probably interacts with PlsX.

The protein resides in the cell inner membrane. It carries out the reaction an acyl phosphate + sn-glycerol 3-phosphate = a 1-acyl-sn-glycero-3-phosphate + phosphate. It functions in the pathway lipid metabolism; phospholipid metabolism. In terms of biological role, catalyzes the transfer of an acyl group from acyl-phosphate (acyl-PO(4)) to glycerol-3-phosphate (G3P) to form lysophosphatidic acid (LPA). This enzyme utilizes acyl-phosphate as fatty acyl donor, but not acyl-CoA or acyl-ACP. The protein is Glycerol-3-phosphate acyltransferase of Photobacterium profundum (strain SS9).